A 433-amino-acid chain; its full sequence is Forkhead box protein A2-B (433 aa).

The fork-head DNA-binding region spans 147-241 (KPPYSYISLI…ENGCYLRRQK (95 aa)). A compositionally biased stretch (basic and acidic residues) spans 247 to 260 (KKPSLREGGGKKLS). 2 disordered regions span residues 247–337 (KKPS…QSHL) and 407–433 (SGLE…MNSS). Positions 261–282 (EGASSVGSVGNSSSERSVGNES) are enriched in low complexity. The span at 292-302 (EQKRSLVDMKS) shows a compositional bias: basic and acidic residues. The segment covering 315–331 (ASQAQHLLSQHHSVLSH) has biased composition (low complexity). Residues 407–421 (SGLEPSPISSDTSYY) are compositionally biased toward polar residues.

The protein resides in the nucleus. Its function is as follows. Acts as a transcriptional activator during early development, limiting the extent of mesoderm formation in the gastrula. Binds to DNA via the target sequence 5'-GT[AC]AACA-3', with 5'-GTAAACA-3' being the preferred binding site. This Xenopus laevis (African clawed frog) protein is Forkhead box protein A2-B (foxa2-b).